The primary structure comprises 499 residues: Cysteine--tRNA ligase (499 aa).

C30 is a Zn(2+) binding site. A 'HIGH' region motif is present at residues P32–N42. Zn(2+)-binding residues include C221, H246, and E250. The 'KMSKS' region motif lies at K279–S283. Position 282 (K282) interacts with ATP.

This sequence belongs to the class-I aminoacyl-tRNA synthetase family. In terms of assembly, monomer. The cofactor is Zn(2+).

The protein resides in the cytoplasm. The enzyme catalyses tRNA(Cys) + L-cysteine + ATP = L-cysteinyl-tRNA(Cys) + AMP + diphosphate. This is Cysteine--tRNA ligase from Cereibacter sphaeroides (strain ATCC 17023 / DSM 158 / JCM 6121 / CCUG 31486 / LMG 2827 / NBRC 12203 / NCIMB 8253 / ATH 2.4.1.) (Rhodobacter sphaeroides).